The sequence spans 1322 residues: Chitin synthase chs-1 (1322 aa).

The Extracellular portion of the chain corresponds to 1 to 39 (MNDGENYWNAFRSHKRSATDGPTLSPWMVTVLQATKLLL). Residues 40 to 60 (FALCNIVLTLGSVFSKLIVLI) form a helical membrane-spanning segment. Over 61 to 128 (MATNIVPRAH…KGQCGQLVKS (68 aa)) the chain is Cytoplasmic. Residues 129–149 (VVVLESLRAIGLAVLSFHVFP) traverse the membrane as a helical segment. Residues 150–156 (QLDLARC) are Extracellular-facing. Residues 157 to 177 (LVLSACFPLVAVLQRSLVAMV) traverse the membrane as a helical segment. The Cytoplasmic segment spans residues 178–193 (SAARTGRSFRNRLGRC). A helical membrane pass occupies residues 194-214 (FVAIPHVIMFLVLMSSCYVWA). Residues 215–221 (LFDNKFT) lie on the Extracellular side of the membrane. A helical membrane pass occupies residues 222–242 (AIIALPIGVICTSAGFWESWI). Topologically, residues 243–269 (DTTHSGTSFDELYRLKYAVRKMNTTTK) are cytoplasmic. Residues 270-290 (LIVSLMRIVCTVSVLVSAVYI) form a helical membrane-spanning segment. Topologically, residues 291–316 (NDHKKLNSSHFVKAFFSFSTRQPHTR) are extracellular. N-linked (GlcNAc...) asparagine glycosylation occurs at Asn-297. The helical transmembrane segment at 317–337 (LLLLATGIIVLHFVMRGISRF) threads the bilayer. The Cytoplasmic segment spans residues 338–342 (LAALD). The chain crosses the membrane as a helical span at residues 343–363 (LHPFSFVHPLSIAPLIAYGYV). Residues 364–396 (RYACQSPTCSIARRLARFGLHWVCDQWFQSARG) are Extracellular-facing. A helical membrane pass occupies residues 397 to 417 (IASPDFYICLIWLLVGCYRGW). Residues 418–836 (RLVRQRYFDT…AISYAYIAYQ (419 aa)) are Cytoplasmic-facing. Residues 455–486 (LNRQEKTMLTEEEDISDENDELRIRNDEVDRV) adopt a coiled-coil conformation. A helical membrane pass occupies residues 837 to 857 (FLVIFFSMLGPAIIFTMLVFA). Residues 858-865 (QVAAFELR) are Extracellular-facing. A helical membrane pass occupies residues 866–886 (GSDVMLYNGIPIGFFIVLCFT). The Cytoplasmic segment spans residues 887–892 (TESNIQ). A helical membrane pass occupies residues 893–913 (LIYAKYMSIAYAFVMLAVLVA). Residues 914–922 (TSSQIVLET) lie on the Extracellular side of the membrane. The helical transmembrane segment at 923–943 (VLAPTSLFIVTMVGIFFFAAC) threads the bilayer. Topologically, residues 944–951 (LHPKEFTN) are cytoplasmic. A helical membrane pass occupies residues 952–972 (IIHGVVFFLMIPSTYVFLTLY). Over 973-1148 (SLINLNVITW…AVAEGLASLR (176 aa)) the chain is Extracellular. Residues 1019–1053 (ISCREKKEHEERREKMEKKMQRMELALRSIESGAD) are a coiled coil. Residues 1149–1169 (NQIAFTILLVNSLLALAIFLI) form a helical membrane-spanning segment. Topologically, residues 1170–1209 (QKHKNVLSIKFSPIKNFRWTKMNEMTGQYEETDEPLKIDP) are cytoplasmic. Residues 1210-1230 (LGMGIVVFLLIILFVQTLGML) form a helical membrane-spanning segment. Residues 1231 to 1322 (LHRLNTMIGA…MQRSALSTTE (92 aa)) lie on the Extracellular side of the membrane.

The protein belongs to the chitin synthase family. Class IV subfamily.

Its subcellular location is the cell membrane. The catalysed reaction is [(1-&gt;4)-N-acetyl-beta-D-glucosaminyl](n) + UDP-N-acetyl-alpha-D-glucosamine = [(1-&gt;4)-N-acetyl-beta-D-glucosaminyl](n+1) + UDP + H(+). Essential for the embryonic synthesis of chitin, a component of the eggshell. The sequence is that of Chitin synthase chs-1 from Caenorhabditis elegans.